We begin with the raw amino-acid sequence, 180 residues long: Adenine phosphoribosyltransferase (180 aa).

It belongs to the purine/pyrimidine phosphoribosyltransferase family. In terms of assembly, homodimer.

Its subcellular location is the cytoplasm. It catalyses the reaction AMP + diphosphate = 5-phospho-alpha-D-ribose 1-diphosphate + adenine. The protein operates within purine metabolism; AMP biosynthesis via salvage pathway; AMP from adenine: step 1/1. Catalyzes a salvage reaction resulting in the formation of AMP, that is energically less costly than de novo synthesis. In Mycolicibacterium smegmatis (strain ATCC 700084 / mc(2)155) (Mycobacterium smegmatis), this protein is Adenine phosphoribosyltransferase.